The sequence spans 269 residues: [LysW]-aminoadipate kinase (269 aa).

5 to 8 (KVGG) provides a ligand contact to ATP. Arg64 is a substrate binding site. Residue Tyr78 participates in ATP binding. Residue Asn168 participates in substrate binding.

The protein belongs to the acetylglutamate kinase family. LysZ subfamily.

It is found in the cytoplasm. The catalysed reaction is [amino-group carrier protein]-C-terminal-N-(1,4-dicarboxybutan-1-yl)-L-glutamine + ATP = [amino-group carrier protein]-C-terminal-N-(1-carboxy-5-phosphooxy-5-oxopentan-1-yl)-L-glutamine + ADP. Its pathway is amino-acid biosynthesis; L-lysine biosynthesis via AAA pathway; L-lysine from L-alpha-aminoadipate (Thermus route): step 2/5. Functionally, catalyzes the phosphorylation of LysW-gamma-alpha-aminoadipate. Does not phosphorylate N-acetyl-glutamate. The chain is [LysW]-aminoadipate kinase from Thermus thermophilus (strain ATCC BAA-163 / DSM 7039 / HB27).